Here is a 69-residue protein sequence, read N- to C-terminus: MSRIVLALIRFYQLAISPWLPPRCRYQPTCSQYAIEAVQKHGALKGGWLALRRIGRCHPWGSSGYDPVP.

The protein belongs to the UPF0161 family.

The protein localises to the cell inner membrane. Its function is as follows. Could be involved in insertion of integral membrane proteins into the membrane. The protein is Putative membrane protein insertion efficiency factor of Laribacter hongkongensis (strain HLHK9).